Reading from the N-terminus, the 507-residue chain is Carboxypeptidase sxa2 (507 aa).

Residues 1 to 22 form the signal peptide; the sequence is MLSLFLKSLFAIIIIELTIIHA. Asn-38 and Asn-45 each carry an N-linked (GlcNAc...) asparagine glycan. A disordered region spans residues 41–64; the sequence is SASSNQTVQPRQHAAPSSDRIKSL. Ser-200 is an active-site residue. N-linked (GlcNAc...) asparagine glycosylation is found at Asn-259, Asn-260, and Asn-300. The active site involves Asp-434. A glycan (N-linked (GlcNAc...) asparagine) is linked at Asn-448. His-487 is a catalytic residue.

The protein belongs to the peptidase S10 family.

Its subcellular location is the secreted. Functionally, involved in degradation or processing of the mating pheromones. Its loss causes a persistent response to the pheromones. It may be required for stabilization of enzymes that are essential for zygote formation. May degrade the mating pheromone P-factor. The sequence is that of Carboxypeptidase sxa2 (sxa2) from Schizosaccharomyces pombe (strain 972 / ATCC 24843) (Fission yeast).